A 276-amino-acid chain; its full sequence is Tumor necrosis factor-inducible gene 6 protein (276 aa).

The first 17 residues, 1 to 17, serve as a signal peptide directing secretion; sequence MIILIYLFVLVWEEAQG. One can recognise a Link domain in the interval 36 to 129; it reads GVYHREARSG…SERWDAYCYN (94 aa). 3 disulfides stabilise this stretch: Cys-58-Cys-127, Cys-82-Cys-103, and Cys-135-Cys-161. Asn-118 carries N-linked (GlcNAc...) asparagine glycosylation. The region spanning 135-247 is the CUB domain; it reads CGGVFTDPKR…GGFQIKYVTV (113 aa). The Ca(2+) site is built by Glu-183, Asp-191, Asp-232, Ser-234, and Val-235. An intrachain disulfide couples Cys-188 to Cys-210. Asn-258 is a glycosylation site (N-linked (GlcNAc...) asparagine).

In terms of assembly, interacts (via Link domain) with inter-alpha-inhibitor (I-alpha-I) component bikunin. Interacts with ITIH2/HC2; this interaction is required for transesterification of the HC to hyaluronan. Interacts (via Link and CUB domains) with ITIH1. Chondroitin sulfate may be required for the stability of the complex. Interacts (via Link domain) with various C-X-C and C-C chemokines including PF4, CXCL8, CXCL11, CXCL12, CCL2, CCL7, CCL19, CCL21, and CCL27; this interaction interferes with chemokine binding to glycosaminoglycans. Interacts (primarily via Link domain) with BMP2; this interaction is inhibited by hyaluronan. Interacts (via both Link and CUB domains) with TNFSF11. Interacts (via CUB domain) with FN1 (via type III repeats 9-14); this interaction enhances fibronectin fibril assembly. TNFAIP6 may act as a bridging molecule between FN1 and THBS1. Vascular smooth muscle cells.

The protein resides in the secreted. Major regulator of extracellular matrix organization during tissue remodeling. Catalyzes the transfer of a heavy chain (HC) from inter-alpha-inhibitor (I-alpha-I) complex to hyaluronan. Cleaves the ester bond between the C-terminus of the HC and GalNAc residue of the chondroitin sulfate chain in I-alpha-I complex followed by transesterification of the HC to hyaluronan. In the process, potentiates the antiprotease function of I-alpha-I complex through release of free bikunin. Acts as a catalyst in the formation of hyaluronan-HC oligomers and hyaluronan-rich matrix surrounding the cumulus cell-oocyte complex, a necessary step for oocyte fertilization. Assembles hyaluronan in pericellular matrices that serve as platforms for receptor clustering and signaling. Enables binding of hyaluronan deposited on the surface of macrophages to LYVE1 on lymphatic endothelium and facilitates macrophage extravasation. Alters hyaluronan binding to functionally latent CD44 on vascular endothelium, switching CD44 into an active state that supports leukocyte rolling. Modulates the interaction of chemokines with extracellular matrix components and proteoglycans on endothelial cell surface, likely preventing chemokine gradient formation. In a negative feedback mechanism, may limit excessive neutrophil recruitment at inflammatory sites by antagonizing the association of CXCL8 with glycosaminoglycans on vascular endothelium. Has a role in osteogenesis and bone remodeling. Inhibits BMP2-dependent differentiation of mesenchymal stem cell to osteoblasts. Protects against bone erosion during inflammation by inhibiting TNFSF11/RANKL-dependent osteoclast activation. This chain is Tumor necrosis factor-inducible gene 6 protein (TNFAIP6), found in Oryctolagus cuniculus (Rabbit).